We begin with the raw amino-acid sequence, 713 residues long: Acetyl-coenzyme A synthetase 1 (713 aa).

Positions 1–39 (MSPSAVQSSKLEEQSSEIDKLKAKMSQSAATAQQKKEHE) are disordered. Residues 10–22 (KLEEQSSEIDKLK) show a composition bias toward basic and acidic residues. CoA is bound by residues 248 to 251 (RGGK) and T367. ATP-binding positions include 443-445 (GEP), 467-472 (DTYWQT), D559, and R574. The short motif at 552 to 600 (PGYYFTGDGAAKDKDGYIWILGRVDDVVNVSGHRLSTAEIEAAIIEDPI) is the FACS element. S582 contacts CoA. R585 serves as a coordination point for ATP. R650 serves as a coordination point for CoA. The Microbody targeting signal signature appears at 711-713 (VKL).

This sequence belongs to the ATP-dependent AMP-binding enzyme family.

The protein resides in the microsome. It is found in the cytoplasm. Its subcellular location is the mitochondrion. The protein localises to the nucleus. The enzyme catalyses acetate + ATP + CoA = acetyl-CoA + AMP + diphosphate. Catalyzes the production of acetyl-CoA. Provides the acetyl-CoA source for histone acetylation in the nucleus. 'Aerobic' isozyme of acetyl-coenzyme A synthetase, which supports growth on nonfermentable carbon sources such as glycerol and ethanol. May be required for assimilation of ethanol and acetate. The protein is Acetyl-coenzyme A synthetase 1 (ACS1) of Saccharomyces cerevisiae (strain ATCC 204508 / S288c) (Baker's yeast).